The following is a 402-amino-acid chain: Protein HAIKU1 (402 aa).

Disordered regions lie at residues 1 to 44, 63 to 135, 160 to 266, and 346 to 402; these read MDRP…LQTQ, TGSP…QQPM, SSLG…LVPS, and QPLT…WNDY. Residues 24 to 44 show a composition bias toward polar residues; sequence LHQSTFAASTSNGAAPRLQTQ. Positions 55–64 match the VQ motif; sequence FRSIVQQLTG. A compositionally biased stretch (polar residues) spans 76–87; it reads QNNSLRPQNTRL. Over residues 103–113 the composition is skewed to pro residues; sequence VPLPSMAPPQS. Residues 160-173 show a composition bias toward polar residues; that stretch reads SSLGDSGPNANQMQ. The span at 218-240 shows a compositional bias: low complexity; that stretch reads MPAQSQSQSQPQPQPQPQQHMMP. Pro residues predominate over residues 257–266; that stretch reads YLPPPGLVPS. The span at 349 to 358 shows a compositional bias: polar residues; the sequence is TPNFSFSQIA. A compositionally biased stretch (pro residues) spans 371-380; the sequence is QGPPQPPPSP. A compositionally biased stretch (low complexity) spans 381 to 390; sequence GLMFPLSPSG.

Interacts with WRKY10. Interacts with MPK6.

It localises to the nucleus. Its function is as follows. Modulates seed size by negatively regulating the cellularization of syncytial endosperm. May function by binding and modulating the activity of WRKY10 transcription factor. The protein is Protein HAIKU1 of Arabidopsis thaliana (Mouse-ear cress).